A 965-amino-acid polypeptide reads, in one-letter code: Isoleucine--tRNA ligase (965 aa).

The 'HIGH' region signature appears at 68–78; it reads PYANGSLHMGH. Residue glutamate 582 coordinates L-isoleucyl-5'-AMP. A 'KMSKS' region motif is present at residues 623–627; it reads KMSKS. Lysine 626 contacts ATP. Zn(2+) contacts are provided by cysteine 936, cysteine 939, cysteine 956, and cysteine 959.

The protein belongs to the class-I aminoacyl-tRNA synthetase family. IleS type 1 subfamily. As to quaternary structure, monomer. The cofactor is Zn(2+).

Its subcellular location is the cytoplasm. It catalyses the reaction tRNA(Ile) + L-isoleucine + ATP = L-isoleucyl-tRNA(Ile) + AMP + diphosphate. Its function is as follows. Catalyzes the attachment of isoleucine to tRNA(Ile). As IleRS can inadvertently accommodate and process structurally similar amino acids such as valine, to avoid such errors it has two additional distinct tRNA(Ile)-dependent editing activities. One activity is designated as 'pretransfer' editing and involves the hydrolysis of activated Val-AMP. The other activity is designated 'posttransfer' editing and involves deacylation of mischarged Val-tRNA(Ile). This is Isoleucine--tRNA ligase from Prochlorococcus marinus subsp. pastoris (strain CCMP1986 / NIES-2087 / MED4).